Here is a 290-residue protein sequence, read N- to C-terminus: Phosphoribulokinase 1 (290 aa).

Residue 12-20 (GSSGAGTST) coordinates ATP.

It belongs to the phosphoribulokinase family. In terms of assembly, homooctamer.

It catalyses the reaction D-ribulose 5-phosphate + ATP = D-ribulose 1,5-bisphosphate + ADP + H(+). It participates in carbohydrate biosynthesis; Calvin cycle. Activated by NADH and inhibited by phosphoenolpyruvate. This chain is Phosphoribulokinase 1 (prkA), found in Cereibacter sphaeroides (Rhodobacter sphaeroides).